A 1755-amino-acid polypeptide reads, in one-letter code: Transposon TyH3 Gag-Pol polyprotein (1755 aa).

Polar residues-rich tracts occupy residues 1–23, 48–60, and 127–152; these read MESQ…SVTS, TKAN…TPAS, and QSQF…GNTF. Disordered stretches follow at residues 1 to 93, 126 to 173, and 352 to 421; these read MESQ…MMTQ, PQSQ…RPPP, and GSRN…SKST. A compositionally biased stretch (low complexity) spans 153 to 165; it reads TDSSSADSDMTST. The segment at 299 to 401 is RNA-binding; sequence NNGIHINNKV…NSKSKTARAH (103 aa). The span at 402–418 shows a compositional bias: low complexity; that stretch reads NVSTSNNSPSTDNDSIS. At serine 416 the chain carries Phosphoserine. The active-site For protease activity; shared with dimeric partner is aspartate 461. The integrase-type zinc finger-like stretch occupies residues 583-640; the sequence is NVHTSESTRKYPYPFIHRMLAHANAQTIRYSLKNNTITYFNESDVDWSSAIDYQCPDC. Positions 660–835 constitute an Integrase catalytic domain; it reads NSYEPFQYLH…AGLDISTLLP (176 aa). Residues aspartate 671 and aspartate 736 each contribute to the Mg(2+) site. 3 disordered regions span residues 956–1087, 1092–1111, and 1130–1187; these read SKAV…ETEK, RSPS…NIVP, and DLPL…DNET. A compositionally biased stretch (low complexity) spans 960–969; it reads SPTDSTPPST. Residues 1005–1015 are compositionally biased toward polar residues; it reads STPQISNIEST. Basic and acidic residues predominate over residues 1038 to 1053; that stretch reads ESSHASKSKDFRHSDS. 2 stretches are compositionally biased toward polar residues: residues 1054-1082 and 1101-1111; these read YSEN…QISD and PENNSSHNIVP. Positions 1178–1212 match the Bipartite nuclear localization signal motif; the sequence is KKRSLEDNETEIKVSRDTWNTKNMRSLEPPRSKKR. One can recognise a Reverse transcriptase Ty1/copia-type domain in the interval 1338 to 1476; that stretch reads NNYYITQLDI…DILGLEIKYQ (139 aa). Residues aspartate 1346, aspartate 1427, aspartate 1428, aspartate 1610, glutamate 1652, and aspartate 1685 each coordinate Mg(2+). The region spanning 1610–1752 is the RNase H Ty1/copia-type domain; sequence DASYGNQPYY…IKTFKLLTNK (143 aa).

The capsid protein forms a homotrimer, from which the VLPs are assembled. The protease is a homodimer, whose active site consists of two apposed aspartic acid residues. Initially, virus-like particles (VLPs) are composed of the structural unprocessed proteins Gag and Gag-Pol, and also contain the host initiator methionine tRNA (tRNA(i)-Met) which serves as a primer for minus-strand DNA synthesis, and a dimer of genomic Ty RNA. Processing of the polyproteins occurs within the particle and proceeds by an ordered pathway, called maturation. First, the protease (PR) is released by autocatalytic cleavage of the Gag-Pol polyprotein yielding capsid protein p45 and a Pol-p154 precursor protein. This cleavage is a prerequisite for subsequent processing of Pol-p154 at the remaining sites to release the mature structural and catalytic proteins. Maturation takes place prior to the RT reaction and is required to produce transposition-competent VLPs.

Its subcellular location is the cytoplasm. It is found in the nucleus. The enzyme catalyses DNA(n) + a 2'-deoxyribonucleoside 5'-triphosphate = DNA(n+1) + diphosphate. It carries out the reaction Endonucleolytic cleavage to 5'-phosphomonoester.. Its function is as follows. Capsid protein (CA) is the structural component of the virus-like particle (VLP), forming the shell that encapsulates the retrotransposons dimeric RNA genome. The particles are assembled from trimer-clustered units and there are holes in the capsid shells that allow for the diffusion of macromolecules. CA also has nucleocapsid-like chaperone activity, promoting primer tRNA(i)-Met annealing to the multipartite primer-binding site (PBS), dimerization of Ty1 RNA and initiation of reverse transcription. Functionally, the aspartyl protease (PR) mediates the proteolytic cleavages of the Gag and Gag-Pol polyproteins after assembly of the VLP. In terms of biological role, reverse transcriptase/ribonuclease H (RT) is a multifunctional enzyme that catalyzes the conversion of the retro-elements RNA genome into dsDNA within the VLP. The enzyme displays a DNA polymerase activity that can copy either DNA or RNA templates, and a ribonuclease H (RNase H) activity that cleaves the RNA strand of RNA-DNA heteroduplexes during plus-strand synthesis and hydrolyzes RNA primers. The conversion leads to a linear dsDNA copy of the retrotransposon that includes long terminal repeats (LTRs) at both ends. Integrase (IN) targets the VLP to the nucleus, where a subparticle preintegration complex (PIC) containing at least integrase and the newly synthesized dsDNA copy of the retrotransposon must transit the nuclear membrane. Once in the nucleus, integrase performs the integration of the dsDNA into the host genome. The protein is Transposon TyH3 Gag-Pol polyprotein (TY1B) of Saccharomyces cerevisiae (Baker's yeast).